The primary structure comprises 94 residues: Large ribosomal subunit protein eL42 (94 aa).

4 residues coordinate Zn(2+): cysteine 11, cysteine 14, cysteine 71, and cysteine 74. A C4-type zinc finger spans residues cysteine 11–cysteine 74.

Belongs to the eukaryotic ribosomal protein eL42 family. Part of the 50S ribosomal subunit. Requires Zn(2+) as cofactor.

Binds to the 23S rRNA. The sequence is that of Large ribosomal subunit protein eL42 from Pyrococcus abyssi (strain GE5 / Orsay).